A 469-amino-acid polypeptide reads, in one-letter code: Hydrogen cyanide synthase subunit HcnB (469 aa).

In terms of assembly, heterotrimer of HcnA, HcnB and HcnC.

Its subcellular location is the cell membrane. The catalysed reaction is glycine + 2 A = hydrogen cyanide + 2 AH2 + CO2. Its function is as follows. A three-component membrane-bound flavoenzyme that catalyzes the formation of hydrogen cyanide, a secondary metabolite, by transfer of electrons to a cyanide-resistant branch of the aerobic respiratory chain. Contributes to suppression of black root rot of tobacco. In Pseudomonas protegens (strain DSM 19095 / LMG 27888 / CFBP 6595 / CHA0), this protein is Hydrogen cyanide synthase subunit HcnB.